The following is a 307-amino-acid chain: 2-haloacid dehalogenase, configuration-inverting (307 aa).

The protein belongs to the HAD-like hydrolase superfamily. S-2-haloalkanoic acid dehalogenase family. In terms of assembly, homodimer.

It carries out the reaction an (S)-2-haloacid + H2O = a (2R)-2-hydroxycarboxylate + a halide anion + H(+). The catalysed reaction is an (R)-2-haloacid + H2O = a (2S)-2-hydroxycarboxylate + a halide anion + H(+). Functionally, dehalogenates both (S)- and (R)-2-haloalkanoic acids to the corresponding (R)- and (S)-hydroxyalkanoic acids, respectively, with inversion of configuration at C-2. Acts on 2-haloalkanoic acids whose carbon chain lengths are five or less. The chain is 2-haloacid dehalogenase, configuration-inverting from Pseudomonas sp. (strain 113).